The chain runs to 178 residues: Interleukin-10 (178 aa).

An N-terminal signal peptide occupies residues 1–18; the sequence is MHSSALLCCLVLLTGVRA. 2 disulfide bridges follow: C30-C126 and C80-C132. Residue N134 is glycosylated (N-linked (GlcNAc...) asparagine).

Belongs to the IL-10 family. In terms of assembly, homodimer. Interacts with IL10RA and IL10RB.

The protein localises to the secreted. In terms of biological role, major immune regulatory cytokine that acts on many cells of the immune system where it has profound anti-inflammatory functions, limiting excessive tissue disruption caused by inflammation. Mechanistically, IL10 binds to its heterotetrameric receptor comprising IL10RA and IL10RB leading to JAK1 and STAT2-mediated phosphorylation of STAT3. In turn, STAT3 translocates to the nucleus where it drives expression of anti-inflammatory mediators. Targets antigen-presenting cells (APCs) such as macrophages and monocytes and inhibits their release of pro-inflammatory cytokines including granulocyte-macrophage colony-stimulating factor /GM-CSF, granulocyte colony-stimulating factor/G-CSF, IL-1 alpha, IL-1 beta, IL-6, IL-8 and TNF-alpha. Also interferes with antigen presentation by reducing the expression of MHC-class II and co-stimulatory molecules, thereby inhibiting their ability to induce T cell activation. In addition, controls the inflammatory response of macrophages by reprogramming essential metabolic pathways including mTOR signaling. This chain is Interleukin-10 (IL10), found in Macaca nemestrina (Pig-tailed macaque).